We begin with the raw amino-acid sequence, 383 residues long: RNA-binding motif, single-stranded-interacting protein 2 (383 aa).

Met1 is modified (N-acetylmethionine). Residues Gln28–Ser56 form a disordered region. The span at Ser42–Gly51 shows a compositional bias: gly residues. RRM domains follow at residues Thr58–Gln131 and Thr137–Gly222. Ser108 bears the Phosphoserine mark. Ser287 carries the post-translational modification Phosphoserine. Positions Ser352–Lys383 are disordered.

It localises to the nucleus. The chain is RNA-binding motif, single-stranded-interacting protein 2 (Rbms2) from Mus musculus (Mouse).